A 287-amino-acid chain; its full sequence is Festuclavine synthase I (287 aa).

This sequence belongs to the fgaFS/easG family.

The enzyme catalyses festuclavine + NAD(+) = 6,8-dimethyl-6,7-didehydroergoline + NADH + H(+). It participates in alkaloid biosynthesis; ergot alkaloid biosynthesis. Its function is as follows. Festuclavine synthase; part of the gene cluster that mediates the biosynthesis of isofumigaclavines, fungal ergot alkaloids. The tryptophan dimethylallyltransferase ifgA catalyzes the first step of ergot alkaloid biosynthesis by condensing dimethylallyl diphosphate (DMAP) and tryptophan to form 4-dimethylallyl-L-tryptophan. The second step is catalyzed by the methyltransferase ifgB that methylates 4-dimethylallyl-L-tryptophan in the presence of S-adenosyl-L-methionine, resulting in the formation of N-methyl-dimethylallyl-L-tryptophan. The catalase ifgD and the FAD-dependent oxidoreductase ifgC then transform N-methyl-dimethylallyl-L-tryptophan to chanoclavine-I which is further oxidized by ifgE in the presence of NAD(+), resulting in the formation of chanoclavine-I aldehyde. The chanoclavine-I aldehyde reductases ifgG and/or fgaOx3 reduce chanoclavine-I aldehyde to dihydrochanoclavine-I aldehyde that spontaneously dehydrates to form 6,8-dimethyl-6,7-didehydroergoline. The festuclavine dehydrogenases ifgF1 and/or ifgF2 then catalyze the reduction of 6,8-dimethyl-6,7-didehydroergoline to form festuclavine. Hydrolysis of festuclavine by a yet undetermined cytochrome P450 monooxygenase (called ifgH) then leads to the formation of isofumigaclavine B which is in turn acetylated by ifgI to isofumigaclavine A. Penicillium roqueforti has interestingly at least two sets of genes for the consumption of chanoclavine-I aldehyde on three different loci, the OYEs ifgG/fgaOx3 and the festuclavine synthase homologs ifgF1/ifgF2. The reason for the duplication of these genes is unclear, probably to ensure the conversion of chanoclavine-I aldehyde by differential gene expression under various environmental conditions. The polypeptide is Festuclavine synthase I (Penicillium roqueforti (strain FM164)).